The chain runs to 727 residues: FACT complex subunit Ssrp1 (727 aa).

Disordered stretches follow at residues 458-565 (AEAR…AFML) and 596-727 (ELKD…EGSD). 2 stretches are compositionally biased toward acidic residues: residues 464–479 (EEED…ESTD) and 487–508 (NESD…DDSD). Positions 510-519 (SGGGGDGGTD) are enriched in gly residues. Composition is skewed to basic and acidic residues over residues 529–555 (KKNE…DTGK), 596–620 (ELKD…EMRN), and 675–703 (DQEK…KSES). The HMG box DNA-binding region spans 556–622 (PKRGTSAFML…RYQEEMRNYK (67 aa)). Over residues 704-727 (EGGDSDDASNASEDDDEEEDEGSD) the composition is skewed to acidic residues.

The protein belongs to the SSRP1 family. Component of the FACT complex, a stable heterodimer of dre4/spt16 and Ssrp.

It is found in the nucleus. The protein resides in the chromosome. Its subcellular location is the nucleolus. Its function is as follows. Component of the FACT complex, a general chromatin factor that acts to reorganize nucleosomes. The FACT complex is involved in multiple processes that require DNA as a template such as mRNA elongation, DNA replication and DNA repair. During transcription elongation the FACT complex acts as a histone chaperone that both destabilizes and restores nucleosomal structure. It facilitates the passage of RNA polymerase II and transcription by promoting the dissociation of one histone H2A-H2B dimer from the nucleosome, then subsequently promotes the reestablishment of the nucleosome following the passage of RNA polymerase II. Binds specifically to single-stranded DNA and RNA with highest affinity for nucleotides G and U. The FACT complex is required for expression of Hox genes. This is FACT complex subunit Ssrp1 (Ssrp) from Drosophila pseudoobscura pseudoobscura (Fruit fly).